A 276-amino-acid polypeptide reads, in one-letter code: NH(3)-dependent NAD(+) synthetase (276 aa).

43-50 contacts ATP; that stretch reads GISGGVDS. D49 is a binding site for Mg(2+). R146 lines the deamido-NAD(+) pocket. T166 serves as a coordination point for ATP. E171 is a Mg(2+) binding site. Residues K179 and D186 each contribute to the deamido-NAD(+) site. ATP is bound by residues K195 and T217. 266 to 267 provides a ligand contact to deamido-NAD(+); it reads HK.

This sequence belongs to the NAD synthetase family. In terms of assembly, homodimer.

The catalysed reaction is deamido-NAD(+) + NH4(+) + ATP = AMP + diphosphate + NAD(+) + H(+). It participates in cofactor biosynthesis; NAD(+) biosynthesis; NAD(+) from deamido-NAD(+) (ammonia route): step 1/1. In terms of biological role, catalyzes the ATP-dependent amidation of deamido-NAD to form NAD. Uses ammonia as a nitrogen source. This Aliivibrio salmonicida (strain LFI1238) (Vibrio salmonicida (strain LFI1238)) protein is NH(3)-dependent NAD(+) synthetase.